The chain runs to 430 residues: Glutamate-1-semialdehyde 2,1-aminomutase 2 (430 aa).

An N6-(pyridoxal phosphate)lysine modification is found at K268.

It belongs to the class-III pyridoxal-phosphate-dependent aminotransferase family. HemL subfamily. As to quaternary structure, homodimer. Requires pyridoxal 5'-phosphate as cofactor.

The protein localises to the cytoplasm. It catalyses the reaction (S)-4-amino-5-oxopentanoate = 5-aminolevulinate. Its pathway is porphyrin-containing compound metabolism; protoporphyrin-IX biosynthesis; 5-aminolevulinate from L-glutamyl-tRNA(Glu): step 2/2. The sequence is that of Glutamate-1-semialdehyde 2,1-aminomutase 2 from Shouchella clausii (strain KSM-K16) (Alkalihalobacillus clausii).